A 251-amino-acid polypeptide reads, in one-letter code: Putative glutathione-independent glyoxalase hsp3105 (251 aa).

Belongs to the peptidase C56 family. HSP31-like subfamily.

The protein localises to the cytoplasm. The protein resides in the nucleus. It catalyses the reaction methylglyoxal + H2O = (R)-lactate + H(+). May catalyze the conversion of methylglyoxal (MG) to D-lactate in a single glutathione (GSH)-independent step. May play a role in detoxifying endogenously produced glyoxals. Involved in protection against reactive oxygen species (ROS). In Schizosaccharomyces pombe (strain 972 / ATCC 24843) (Fission yeast), this protein is Putative glutathione-independent glyoxalase hsp3105.